The following is a 689-amino-acid chain: Glycine--tRNA ligase beta subunit (689 aa).

Belongs to the class-II aminoacyl-tRNA synthetase family. Tetramer of two alpha and two beta subunits.

The protein resides in the cytoplasm. The catalysed reaction is tRNA(Gly) + glycine + ATP = glycyl-tRNA(Gly) + AMP + diphosphate. This is Glycine--tRNA ligase beta subunit from Oenococcus oeni (strain ATCC BAA-331 / PSU-1).